The sequence spans 81 residues: Small ribosomal subunit protein bS16c (81 aa).

Belongs to the bacterial ribosomal protein bS16 family.

The protein resides in the plastid. It is found in the chloroplast. In Emiliania huxleyi (Coccolithophore), this protein is Small ribosomal subunit protein bS16c.